The following is a 173-amino-acid chain: MIDSDGFRANVGIIICNRSGQVMWARRFGQHSWQFPQGGVDEGESAEEAMYRELYEEVGLRPEHVQILASTRSWLRYRLPKRLIRQDSKPVCIGQKQKWFLLQLKSSENAIDLNACGHPEFDDWRWVSYWYPVRQVVSFKRDVYRKVMKEFAPTTLPLQVKESNHKRRGMRRN.

In terms of domain architecture, Nudix hydrolase spans 6 to 149 (GFRANVGIII…KRDVYRKVMK (144 aa)). The Nudix box signature appears at 38 to 59 (GGVDEGESAEEAMYRELYEEVG).

It belongs to the Nudix hydrolase family. RppH subfamily. The cofactor is a divalent metal cation.

In terms of biological role, accelerates the degradation of transcripts by removing pyrophosphate from the 5'-end of triphosphorylated RNA, leading to a more labile monophosphorylated state that can stimulate subsequent ribonuclease cleavage. In Shewanella piezotolerans (strain WP3 / JCM 13877), this protein is RNA pyrophosphohydrolase.